The chain runs to 224 residues: MGYSKTLAVSLFAVLLLAPAVLASDPDPLQDFCVADLDGKAVSVNGHPCKPMSEAGDDFLFSSKLAKAGNTSTPNGSAVTELDVAEWPGTNTLGVSMNRVDFAPGGTNPPHVHPRATEIGIVMKGELLVGILGSLDSGNKLYSRVVRAGETFLIPRGLMHFQFNVGKTEASMVVSFNSQNPGIVFVPLTLFGSNPPIPTPVLTKALRVEAGVVELLKSKFAAGF.

The N-terminal stretch at 1-23 (MGYSKTLAVSLFAVLLLAPAVLA) is a signal peptide. Cysteine 33 and cysteine 49 are joined by a disulfide. The Cupin type-1 domain occupies 63–214 (SKLAKAGNTS…ALRVEAGVVE (152 aa)). 2 N-linked (GlcNAc...) asparagine glycosylation sites follow: asparagine 70 and asparagine 75. Mn(2+) contacts are provided by histidine 111, histidine 113, glutamate 118, and histidine 160.

It belongs to the germin family. In terms of assembly, oligomer (believed to be a pentamer but probably hexamer). Post-translationally, glycosylated. A form called G contains antennary GlcNAc residues, whereas a form called G' lacks antennary GlcNAc residues in its otherwise identical glycans. Root.

The protein localises to the secreted. It is found in the extracellular space. It localises to the apoplast. The protein resides in the cell wall. The enzyme catalyses oxalate + O2 + 2 H(+) = H2O2 + 2 CO2. Releases hydrogen peroxide in the apoplast. May play an important role in several aspects of plant growth and defense mechanisms. This is Oxalate oxidase 2 from Hordeum vulgare (Barley).